Reading from the N-terminus, the 264-residue chain is Small ribosomal subunit protein uS3 (264 aa).

The KH type-2 domain maps to 39–107; the sequence is VREYLKKKLK…PVHVNIEEIR (69 aa). Positions 217-264 are disordered; the sequence is EEVAEEKRPRRNARPGDRRPRRDGEGAPAGARRGAPRRGGAGDGKTGE. Basic and acidic residues predominate over residues 230 to 241; that stretch reads RPGDRRPRRDGE. Over residues 253–264 the composition is skewed to gly residues; the sequence is RRGGAGDGKTGE.

The protein belongs to the universal ribosomal protein uS3 family. Part of the 30S ribosomal subunit. Forms a tight complex with proteins S10 and S14.

In terms of biological role, binds the lower part of the 30S subunit head. Binds mRNA in the 70S ribosome, positioning it for translation. This is Small ribosomal subunit protein uS3 from Paraburkholderia phymatum (strain DSM 17167 / CIP 108236 / LMG 21445 / STM815) (Burkholderia phymatum).